Here is a 95-residue protein sequence, read N- to C-terminus: Small ribosomal subunit protein bS6 (95 aa).

Belongs to the bacterial ribosomal protein bS6 family.

Its function is as follows. Binds together with bS18 to 16S ribosomal RNA. This is Small ribosomal subunit protein bS6 from Clostridium kluyveri (strain NBRC 12016).